A 1398-amino-acid chain; its full sequence is Pyrolysin (1398 aa).

An N-terminal signal peptide occupies residues M1–A26. A propeptide spanning residues G27–K149 is cleaved from the precursor. A glycan (N-linked (GlcNAc...) asparagine) is linked at N152. The 503-residue stretch at T154–W656 folds into the Peptidase S8 domain. The active-site Charge relay system is D179. Residues N222, N228, N240, N257, N262, N298, and N327 are each glycosylated (N-linked (GlcNAc...) asparagine). H365 functions as the Charge relay system in the catalytic mechanism. An N-linked (GlcNAc...) asparagine glycan is attached at N406. Residue S590 is the Charge relay system of the active site. Residues N651, N663, N739, N792, N893, N908, N917, N929, N1048, N1056, N1084, N1117, N1133, N1140, N1148, N1208, N1233, N1237, and N1332 are each glycosylated (N-linked (GlcNAc...) asparagine).

This sequence belongs to the peptidase S8 family. Post-translationally, LWM pyrolysin seems to be produced by autoproteolytic activation of HMW pyrolysin. In terms of processing, glycosylated.

It is found in the cell envelope. Its function is as follows. Has endopeptidase activity toward caseins, casein fragments including alpha-S1-casein and synthetic peptides. The polypeptide is Pyrolysin (pls) (Pyrococcus furiosus (strain ATCC 43587 / DSM 3638 / JCM 8422 / Vc1)).